The following is a 105-amino-acid chain: Large ribosomal subunit protein bL21 (105 aa).

Belongs to the bacterial ribosomal protein bL21 family. In terms of assembly, part of the 50S ribosomal subunit. Contacts protein L20.

In terms of biological role, this protein binds to 23S rRNA in the presence of protein L20. The polypeptide is Large ribosomal subunit protein bL21 (Rhizobium etli (strain ATCC 51251 / DSM 11541 / JCM 21823 / NBRC 15573 / CFN 42)).